Reading from the N-terminus, the 257-residue chain is Imidazole glycerol phosphate synthase subunit HisF (257 aa).

Catalysis depends on residues aspartate 11 and aspartate 130.

This sequence belongs to the HisA/HisF family. As to quaternary structure, heterodimer of HisH and HisF.

The protein localises to the cytoplasm. The catalysed reaction is 5-[(5-phospho-1-deoxy-D-ribulos-1-ylimino)methylamino]-1-(5-phospho-beta-D-ribosyl)imidazole-4-carboxamide + L-glutamine = D-erythro-1-(imidazol-4-yl)glycerol 3-phosphate + 5-amino-1-(5-phospho-beta-D-ribosyl)imidazole-4-carboxamide + L-glutamate + H(+). Its pathway is amino-acid biosynthesis; L-histidine biosynthesis; L-histidine from 5-phospho-alpha-D-ribose 1-diphosphate: step 5/9. Functionally, IGPS catalyzes the conversion of PRFAR and glutamine to IGP, AICAR and glutamate. The HisF subunit catalyzes the cyclization activity that produces IGP and AICAR from PRFAR using the ammonia provided by the HisH subunit. The protein is Imidazole glycerol phosphate synthase subunit HisF of Aeromonas salmonicida (strain A449).